The sequence spans 117 residues: Large ribosomal subunit protein bL20 (117 aa).

The protein belongs to the bacterial ribosomal protein bL20 family.

Binds directly to 23S ribosomal RNA and is necessary for the in vitro assembly process of the 50S ribosomal subunit. It is not involved in the protein synthesizing functions of that subunit. The chain is Large ribosomal subunit protein bL20 from Rickettsia bellii (strain OSU 85-389).